Consider the following 269-residue polypeptide: Shikimate dehydrogenase (NADP(+)) (269 aa).

Residues 17–19 (SKS) and Thr-64 each bind shikimate. Residue Lys-68 is the Proton acceptor of the active site. Glu-80 serves as a coordination point for NADP(+). Positions 89 and 105 each coordinate shikimate. NADP(+) is bound by residues 130-134 (GAGGA), 154-159 (NRTRAK), and Met-213. Tyr-215 contacts shikimate. NADP(+) is bound at residue Gly-237.

Belongs to the shikimate dehydrogenase family. In terms of assembly, homodimer.

It catalyses the reaction shikimate + NADP(+) = 3-dehydroshikimate + NADPH + H(+). Its pathway is metabolic intermediate biosynthesis; chorismate biosynthesis; chorismate from D-erythrose 4-phosphate and phosphoenolpyruvate: step 4/7. Its function is as follows. Involved in the biosynthesis of the chorismate, which leads to the biosynthesis of aromatic amino acids. Catalyzes the reversible NADPH linked reduction of 3-dehydroshikimate (DHSA) to yield shikimate (SA). This is Shikimate dehydrogenase (NADP(+)) from Neisseria meningitidis serogroup B (strain ATCC BAA-335 / MC58).